The chain runs to 485 residues: Arginine/ornithine antiporter ArcD (485 aa).

11 consecutive transmembrane segments (helical) span residues 23–43 (ALLPIAGMITFLAVGIVLLGL), 48–68 (PLLWGIAFTGVIARYGWGYTW), 79–99 (IVMGLGAIFILFIIYMLIASW), 116–136 (LTPAVFVPLAALLSFVVATAI), 148–168 (IALVGIGSGLGIPAPLTAGAI), 203–223 (MFPNTIIVGVISLALYAVLGL), 246–266 (GTYTLSVLVLLPLVITFGLAI), 269–289 (YPALPSLGAGVFSAAGVSILI), 323–343 (LEGSIWVITIVFGALSIGGIL), 362–382 (SVGGATLVTALGPLVINALTA), and 441–461 (VLSYLPYYFVGILSPILVVIM).

It belongs to the NhaC Na(+)/H(+) (TC 2.A.35) antiporter family.

Its subcellular location is the cell membrane. The enzyme catalyses L-ornithine(in) + L-arginine(out) = L-ornithine(out) + L-arginine(in). Functionally, uptake of arginine from the medium in exchange for ornithine. In Halobacterium salinarum (strain ATCC 700922 / JCM 11081 / NRC-1) (Halobacterium halobium), this protein is Arginine/ornithine antiporter ArcD (arcD).